We begin with the raw amino-acid sequence, 159 residues long: Nucleotide-binding protein Psyr_4087 (159 aa).

It belongs to the YajQ family.

In terms of biological role, nucleotide-binding protein. In Pseudomonas syringae pv. syringae (strain B728a), this protein is Nucleotide-binding protein Psyr_4087.